The sequence spans 1605 residues: Kinesin-like protein klp-12 (1605 aa).

One can recognise a Kinesin motor domain in the interval 5–358; it reads CVQVALRIRP…MKYANRAKEI (354 aa). ATP is bound at residue 84–91; the sequence is GQTGSGKT. Residues threonine 91 and serine 217 each contribute to the Mg(2+) site. 3 disordered regions span residues 548–596, 1085–1152, and 1198–1232; these read GENV…EESE, VSDA…SNNN, and SRSNLMSSSSSTTTTTLSSSNLLNPRGTTSSSSSK. The segment covering 550–559 has biased composition (polar residues); that stretch reads NVSSEYSSMA. The segment covering 560-596 has biased composition (acidic residues); it reads QDEDGTSNEAEELLDEEDLDEDEDETAEEKQEQEESE. Residues 575–730 are a coiled coil; the sequence is EEDLDEDEDE…KKAKVELIKK (156 aa). The span at 1116 to 1152 shows a compositional bias: polar residues; the sequence is VSTSPASTSFANSTSQSPSFSRNTRFRSTVGGVSNNN. A compositionally biased stretch (low complexity) spans 1200–1232; sequence SNLMSSSSSTTTTTLSSSNLLNPRGTTSSSSSK. 4 WD repeats span residues 1282–1319, 1389–1427, 1525–1566, and 1573–1605; these read GHARGVLSVDVNEKLMVTGSKDRTAKLWDIEACREIRT, FLETLITAADVDPTGQLLFTSFSAYVRVWNLREWKPLGR, AHQQ…RMKL, and AHQEGINDMCSTKSMLFTASGDSTVGFWKSNAV.

It belongs to the TRAFAC class myosin-kinesin ATPase superfamily. Kinesin family. As to quaternary structure, component of a complex at least composed of alpha tubulin and beta tubulin. Within the complex, interacts with the alpha tubulin and beta tubulin dimer.

It is found in the cytoplasm. It localises to the cytoskeleton. Functionally, microtubule-binding motor protein which has ATPase activity. In complex with alpha and beta tubulins, preferentially binds to the growing microtubule plus-end to stabilize it and detaches following ATP hydrolysis. Negatively regulates axonal length through inhibiting microtubule polymerization at its plus-end. The polypeptide is Kinesin-like protein klp-12 (Caenorhabditis elegans).